A 294-amino-acid chain; its full sequence is ATP phosphoribosyltransferase (294 aa).

The protein belongs to the ATP phosphoribosyltransferase family. Long subfamily. Requires Mg(2+) as cofactor.

The protein localises to the cytoplasm. The catalysed reaction is 1-(5-phospho-beta-D-ribosyl)-ATP + diphosphate = 5-phospho-alpha-D-ribose 1-diphosphate + ATP. The protein operates within amino-acid biosynthesis; L-histidine biosynthesis; L-histidine from 5-phospho-alpha-D-ribose 1-diphosphate: step 1/9. Feedback inhibited by histidine. Its function is as follows. Catalyzes the condensation of ATP and 5-phosphoribose 1-diphosphate to form N'-(5'-phosphoribosyl)-ATP (PR-ATP). Has a crucial role in the pathway because the rate of histidine biosynthesis seems to be controlled primarily by regulation of HisG enzymatic activity. This Maricaulis maris (strain MCS10) (Caulobacter maris) protein is ATP phosphoribosyltransferase.